We begin with the raw amino-acid sequence, 347 residues long: Fructose-1,6-bisphosphatase class 1 (347 aa).

Residues Glu106, Asp128, Ile130, and Asp131 each coordinate Mg(2+). Residues 131 to 134, Asn223, Tyr251, and Lys281 each bind substrate; that span reads DGSS. Residue Glu287 participates in Mg(2+) binding.

Belongs to the FBPase class 1 family. As to quaternary structure, homotetramer. It depends on Mg(2+) as a cofactor.

It is found in the cytoplasm. The enzyme catalyses beta-D-fructose 1,6-bisphosphate + H2O = beta-D-fructose 6-phosphate + phosphate. It functions in the pathway carbohydrate biosynthesis; Calvin cycle. The polypeptide is Fructose-1,6-bisphosphatase class 1 (Synechocystis sp. (strain ATCC 27184 / PCC 6803 / Kazusa)).